The chain runs to 160 residues: Non-secretory ribonuclease (160 aa).

The signal sequence occupies residues 1 to 27 (MVPKLFTSPICLLLLLGLMGVEGSLHA). Trp-34 is a glycosylation site (C-linked (Man) tryptophan). His-42 functions as the Proton acceptor in the catalytic mechanism. A glycan (N-linked (GlcNAc...) asparagine) is linked at Asn-44. 4 cysteine pairs are disulfide-bonded: Cys-50-Cys-110, Cys-64-Cys-122, Cys-82-Cys-137, and Cys-89-Cys-98. Tyr-60 is subject to 3'-nitrotyrosine. 65–69 (KNQNT) serves as a coordination point for substrate. N-linked (GlcNAc...) asparagine glycans are attached at residues Asn-92, Asn-111, and Asn-138. His-155 serves as the catalytic Proton donor.

This sequence belongs to the pancreatic ribonuclease family. As to quaternary structure, interacts with and forms a tight 1:1 complex with RNH1. Dimerization of two such complexes may occur.

Its subcellular location is the lysosome. It is found in the cytoplasmic granule. The catalysed reaction is an [RNA] containing cytidine + H2O = an [RNA]-3'-cytidine-3'-phosphate + a 5'-hydroxy-ribonucleotide-3'-[RNA].. The enzyme catalyses an [RNA] containing uridine + H2O = an [RNA]-3'-uridine-3'-phosphate + a 5'-hydroxy-ribonucleotide-3'-[RNA].. Functionally, this is a non-secretory ribonuclease. It is a pyrimidine specific nuclease with a slight preference for U. Cytotoxin and helminthotoxin. Possesses a wide variety of biological activities. The polypeptide is Non-secretory ribonuclease (RNASE2) (Macaca nemestrina (Pig-tailed macaque)).